The sequence spans 299 residues: Bifunctional protein FolD (299 aa).

NADP(+) is bound by residues 169 to 171 (GRS), Ser-194, and Ile-235.

The protein belongs to the tetrahydrofolate dehydrogenase/cyclohydrolase family. In terms of assembly, homodimer.

The enzyme catalyses (6R)-5,10-methylene-5,6,7,8-tetrahydrofolate + NADP(+) = (6R)-5,10-methenyltetrahydrofolate + NADPH. The catalysed reaction is (6R)-5,10-methenyltetrahydrofolate + H2O = (6R)-10-formyltetrahydrofolate + H(+). The protein operates within one-carbon metabolism; tetrahydrofolate interconversion. Catalyzes the oxidation of 5,10-methylenetetrahydrofolate to 5,10-methenyltetrahydrofolate and then the hydrolysis of 5,10-methenyltetrahydrofolate to 10-formyltetrahydrofolate. The polypeptide is Bifunctional protein FolD (Trichormus variabilis (strain ATCC 29413 / PCC 7937) (Anabaena variabilis)).